Here is a 440-residue protein sequence, read N- to C-terminus: Alpha-ionylideneethane synthase aba3 (440 aa).

It belongs to the alpha-ionylideneethane synthase family.

It functions in the pathway hormone biosynthesis. Its function is as follows. Alpha-ionylideneethane synthase; part of the gene cluster that mediates the biosynthesis of abscisic acid (ABA), a phytohormone that acts antagonistically toward salicylic acid (SA), jasmonic acid (JA) and ethylene (ETH) signaling, to impede plant defense responses. The first step of the pathway catalyzes the reaction from farnesyl diphosphate to alpha-ionylideneethane performed by the alpha-ionylideneethane synthase aba3 via a three-step reaction mechanism involving 2 neutral intermediates, beta-farnesene and allofarnesene. The cytochrome P450 monooxygenase aba1 might then be involved in the conversion of alpha-ionylideneethane to alpha-ionylideneacetic acid. Alpha-ionylideneacetic acid is further converted to abscisic acid in 2 steps involving the cytochrome P450 monooxygenase aba2 and the short-chain dehydrogenase/reductase aba4, via the intermediates 1'-deoxy-ABA or 1',4'-trans-diol-ABA, depending on the order of action of these 2 enzymes. Aba2 is responsible for the hydroxylation of carbon atom C-1' and aba4 might be involved in the oxidation of the C-4' carbon atom. In Botryotinia fuckeliana (strain B05.10) (Noble rot fungus), this protein is Alpha-ionylideneethane synthase aba3.